The sequence spans 213 residues: Heterochromatin protein 1 (213 aa).

2 disordered regions span residues 1–24 and 74–151; these read MGKK…EEEY and RKDE…TGFD. Positions 24 to 82 constitute a Chromo 1 domain; the sequence is YAVEKILDRRVRKGKVEYYLKWKGYAETENTWEPEGNLDCQDLIQQYELSRKDEANAAA. Basic and acidic residues predominate over residues 89–104; the sequence is SKKERPGSSTKVKETG. Over residues 105–115 the composition is skewed to polar residues; the sequence is RTSTTASNSSG. Residues 154–212 enclose the Chromo 2 domain; sequence LEAEKILGASDNNGRLTFLIQFKGVDQAEMVPSTVANVKIPQMVIRFYEERLSWYSDNE.

Its subcellular location is the nucleus. Its function is as follows. Structural component of heterochromatin, involved in gene repression and the modification of position-effect-variegation. Recognizes and binds histone H3 tails methylated at 'Lys-9', leading to epigenetic repression. The protein is Heterochromatin protein 1 (HP1A) of Drosophila virilis (Fruit fly).